The chain runs to 309 residues: Homoserine kinase (309 aa).

91 to 101 is a binding site for ATP; that stretch reads PIGSGLGSSAC.

It belongs to the GHMP kinase family. Homoserine kinase subfamily.

It is found in the cytoplasm. It carries out the reaction L-homoserine + ATP = O-phospho-L-homoserine + ADP + H(+). The protein operates within amino-acid biosynthesis; L-threonine biosynthesis; L-threonine from L-aspartate: step 4/5. Its function is as follows. Catalyzes the ATP-dependent phosphorylation of L-homoserine to L-homoserine phosphate. The sequence is that of Homoserine kinase from Klebsiella pneumoniae (strain 342).